The following is a 255-amino-acid chain: uncharacterized protein (255 aa).

Positions 253 to 255 (SKI) match the Microbody targeting signal motif.

The protein belongs to the enoyl-CoA hydratase/isomerase family.

It is found in the peroxisome. This is an uncharacterized protein from Caenorhabditis elegans.